A 719-amino-acid polypeptide reads, in one-letter code: Polyribonucleotide nucleotidyltransferase (719 aa).

Residues D507 and D513 each coordinate Mg(2+). One can recognise a KH domain in the interval 573 to 633 (PKLELFSVDP…EQIKAAKDYI (61 aa)). Residues 658–719 (GQEFQGIVKK…NGKISVDLCE (62 aa)) form the S1 motif domain.

Belongs to the polyribonucleotide nucleotidyltransferase family. Requires Mg(2+) as cofactor.

Its subcellular location is the cytoplasm. The enzyme catalyses RNA(n+1) + phosphate = RNA(n) + a ribonucleoside 5'-diphosphate. In terms of biological role, involved in mRNA degradation. Catalyzes the phosphorolysis of single-stranded polyribonucleotides processively in the 3'- to 5'-direction. This is Polyribonucleotide nucleotidyltransferase from Campylobacter jejuni subsp. jejuni serotype O:23/36 (strain 81-176).